The sequence spans 174 residues: Bifunctional protein PyrR (174 aa).

Positions 97–109 match the PRPP-binding motif; it reads VVIVDDVLYTGRT.

The protein belongs to the purine/pyrimidine phosphoribosyltransferase family. PyrR subfamily. In terms of assembly, homodimer and homohexamer; in equilibrium.

The catalysed reaction is UMP + diphosphate = 5-phospho-alpha-D-ribose 1-diphosphate + uracil. Its function is as follows. Regulates transcriptional attenuation of the pyrimidine nucleotide (pyr) operon by binding in a uridine-dependent manner to specific sites on pyr mRNA. This disrupts an antiterminator hairpin in the RNA and favors formation of a downstream transcription terminator, leading to a reduced expression of downstream genes. Also displays a weak uracil phosphoribosyltransferase activity which is not physiologically significant. The chain is Bifunctional protein PyrR from Macrococcus caseolyticus (strain JCSC5402) (Macrococcoides caseolyticum).